A 61-amino-acid polypeptide reads, in one-letter code: Large ribosomal subunit protein uL30 (61 aa).

It belongs to the universal ribosomal protein uL30 family. Part of the 50S ribosomal subunit.

The sequence is that of Large ribosomal subunit protein uL30 from Corynebacterium glutamicum (strain R).